The sequence spans 340 residues: Glyceraldehyde-3-phosphate dehydrogenase, cytosolic (340 aa).

NAD(+) is bound by residues 16–17 (RI), Asp-38, and Arg-85. D-glyceraldehyde 3-phosphate contacts are provided by residues 156–158 (SCT), Thr-187, 216–217 (TG), and Arg-239. The active-site Nucleophile is Cys-157. NAD(+) is bound at residue Asn-321.

Belongs to the glyceraldehyde-3-phosphate dehydrogenase family. As to quaternary structure, homotetramer.

It is found in the cytoplasm. It catalyses the reaction D-glyceraldehyde 3-phosphate + phosphate + NAD(+) = (2R)-3-phospho-glyceroyl phosphate + NADH + H(+). It participates in carbohydrate degradation; glycolysis; pyruvate from D-glyceraldehyde 3-phosphate: step 1/5. Key enzyme in glycolysis that catalyzes the first step of the pathway by converting D-glyceraldehyde 3-phosphate (G3P) into 3-phospho-D-glyceroyl phosphate. Essential for the maintenance of cellular ATP levels and carbohydrate metabolism. This is Glyceraldehyde-3-phosphate dehydrogenase, cytosolic (GAPC) from Pinus sylvestris (Scotch pine).